The sequence spans 369 residues: Flagellar P-ring protein (369 aa).

Positions 1 to 23 (MRSLLRWMGVLLLCGLCAAPAQA) are cleaved as a signal peptide.

It belongs to the FlgI family. The basal body constitutes a major portion of the flagellar organelle and consists of four rings (L,P,S, and M) mounted on a central rod.

The protein localises to the periplasm. It is found in the bacterial flagellum basal body. Assembles around the rod to form the L-ring and probably protects the motor/basal body from shearing forces during rotation. The protein is Flagellar P-ring protein of Chromohalobacter salexigens (strain ATCC BAA-138 / DSM 3043 / CIP 106854 / NCIMB 13768 / 1H11).